The following is a 423-amino-acid chain: Gamma-glutamyl phosphate reductase (423 aa).

The protein belongs to the gamma-glutamyl phosphate reductase family.

The protein localises to the cytoplasm. It catalyses the reaction L-glutamate 5-semialdehyde + phosphate + NADP(+) = L-glutamyl 5-phosphate + NADPH + H(+). The protein operates within amino-acid biosynthesis; L-proline biosynthesis; L-glutamate 5-semialdehyde from L-glutamate: step 2/2. In terms of biological role, catalyzes the NADPH-dependent reduction of L-glutamate 5-phosphate into L-glutamate 5-semialdehyde and phosphate. The product spontaneously undergoes cyclization to form 1-pyrroline-5-carboxylate. This chain is Gamma-glutamyl phosphate reductase, found in Burkholderia thailandensis (strain ATCC 700388 / DSM 13276 / CCUG 48851 / CIP 106301 / E264).